Consider the following 302-residue polypeptide: Recombination-associated protein RdgC (302 aa).

It belongs to the RdgC family.

The protein resides in the cytoplasm. The protein localises to the nucleoid. Functionally, may be involved in recombination. The protein is Recombination-associated protein RdgC of Psychromonas ingrahamii (strain DSM 17664 / CCUG 51855 / 37).